Consider the following 262-residue polypeptide: Purine nucleoside phosphorylase SSP1584 (262 aa).

Zn(2+) is bound by residues histidine 79, cysteine 124, and histidine 141.

This sequence belongs to the purine nucleoside phosphorylase YfiH/LACC1 family. Homodimer. Cu(2+) is required as a cofactor. The cofactor is Zn(2+).

The enzyme catalyses adenosine + phosphate = alpha-D-ribose 1-phosphate + adenine. It catalyses the reaction S-methyl-5'-thioadenosine + phosphate = 5-(methylsulfanyl)-alpha-D-ribose 1-phosphate + adenine. It carries out the reaction inosine + phosphate = alpha-D-ribose 1-phosphate + hypoxanthine. The catalysed reaction is adenosine + H2O + H(+) = inosine + NH4(+). In terms of biological role, purine nucleoside enzyme that catalyzes the phosphorolysis of adenosine and inosine nucleosides, yielding D-ribose 1-phosphate and the respective free bases, adenine and hypoxanthine. Also catalyzes the phosphorolysis of S-methyl-5'-thioadenosine into adenine and S-methyl-5-thio-alpha-D-ribose 1-phosphate. Also has adenosine deaminase activity. The sequence is that of Purine nucleoside phosphorylase SSP1584 from Staphylococcus saprophyticus subsp. saprophyticus (strain ATCC 15305 / DSM 20229 / NCIMB 8711 / NCTC 7292 / S-41).